Consider the following 2073-residue polypeptide: Putative mediator of RNA polymerase II transcription subunit 26 (2073 aa).

Disordered stretches follow at residues 22–94 (IERM…QSFQ), 115–146 (PQLQQQQQQQQQQQPSFNSNNNNNNNTNTYNF), 241–260 (QMQQQQIPHHQQNQQLQQQQ), and 287–334 (QQHQ…QNQQ). A compositionally biased stretch (polar residues) spans 31–41 (NQSVEMDSHTF). The segment covering 42–78 (NNNNNNNNNNNINNNNNINNNNNNNNNNNNNNNSINN) has biased composition (low complexity). Coiled coils occupy residues 166–453 (IQQQ…QQQQ) and 674–710 (LRQQQQQQQQQQQQQQQQQQQQQQQQQQQIQIQNQTI). Composition is skewed to low complexity over residues 287–314 (QQHQQHQQHQQHQQQHQQHQQQHQQHQQ) and 322–334 (QQHQQQQQPQNQQ). Disordered stretches follow at residues 796–879 (KGNN…NNDI), 908–1175 (INNN…NNNI), 1215–1260 (NTTS…TVIN), 1403–1475 (NTSS…LPPK), 1489–1539 (KLST…SLSP), 1551–1571 (AAAAKKQQTQELSDSTAKSLS), 1587–1645 (KSQT…SKGK), 1804–1836 (INNNNNTHSNSPDENNTKMINDENNDPNNTGSS), 1868–1935 (NNNN…GYNN), and 2019–2073 (FNNN…QSYS). Low complexity-rich tracts occupy residues 798–870 (NNNN…NTNN) and 923–937 (SSSSNSNSSSPNIPN). Basic residues predominate over residues 938 to 947 (KPKKPVKSNS). A compositionally biased stretch (acidic residues) spans 953–963 (LLEDNDSDSSD). Composition is skewed to low complexity over residues 964 to 977 (SSDSSDSSDSSDSS), 1027 to 1038 (ASTATSTTTTTT), 1047 to 1065 (PTSKIKPSSTIPSQPTSIT), 1073 to 1115 (STTS…SSSS), and 1127 to 1156 (KKPISTINNNTLNNNTNSSINKIASNSTST). The segment covering 1157–1166 (LGNKNLGTPS) has biased composition (polar residues). 2 stretches are compositionally biased toward low complexity: residues 1215 to 1258 (NTTS…TTTV) and 1403 to 1424 (NTSSTTSSASSSSSSSISNGNN). Positions 1425–1440 (SDKKRNRDQPITDTSK) are enriched in basic and acidic residues. 4 stretches are compositionally biased toward low complexity: residues 1444–1465 (SSSSSSSSSSSSSSSTNARSSS), 1490–1520 (LSTPSSSSSSSSSSSSSSTTTTTTSTGSTIP), 1527–1539 (SSSSSNNNNSLSP), and 1551–1560 (AAAAKKQQTQ). The span at 1561 to 1571 (ELSDSTAKSLS) shows a compositional bias: polar residues. Composition is skewed to low complexity over residues 1599–1609 (SSNVSGKSDSS) and 1804–1817 (INNNNNTHSNSPDE). Positions 1884–1930 (NNMGNMNNQFNNMNNNNNNNQFNNGYNNNNNNNNNNNNNNNNNNNNM) form a coiled coil.

This sequence belongs to the Mediator complex subunit 26 family. In terms of assembly, component of the Mediator complex.

The protein localises to the nucleus. Functionally, component of the Mediator complex, a coactivator involved in the regulated transcription of nearly all RNA polymerase II-dependent genes. Mediator functions as a bridge to convey information from gene-specific regulatory proteins to the basal RNA polymerase II transcription machinery. Mediator is recruited to promoters by direct interactions with regulatory proteins and serves as a scaffold for the assembly of a functional preinitiation complex with RNA polymerase II and the general transcription factors. This Dictyostelium discoideum (Social amoeba) protein is Putative mediator of RNA polymerase II transcription subunit 26 (med26).